The following is a 213-amino-acid chain: Dimethylamine corrinoid protein 1 (213 aa).

A B12-binding N-terminal domain is found at 1 to 90 (MSKEELLQEL…LMPEGSASSK (90 aa)). Residues 91 to 213 (MGVIVNGTVE…AVAKAKELLA (123 aa)) form the B12-binding domain. Residue H104 coordinates methylcob(III)alamin.

It belongs to the methylamine corrinoid protein family.

It functions in the pathway one-carbon metabolism; methanogenesis from dimethylamine. In terms of biological role, acts as a methyl group carrier between MtbB and MtbA. This Methanosarcina acetivorans (strain ATCC 35395 / DSM 2834 / JCM 12185 / C2A) protein is Dimethylamine corrinoid protein 1 (mtbC1).